A 433-amino-acid chain; its full sequence is N-lysine methyltransferase SMYD2 (433 aa).

One can recognise an SET domain in the interval 7–241 (GGLERFCSPG…PGEEVFTSYI (235 aa)). 17-19 (KGR) provides a ligand contact to S-adenosyl-L-methionine. 8 residues coordinate Zn(2+): C52, C55, C65, C68, C74, C78, H86, and C90. The MYND-type zinc finger occupies 52-90 (CEYCFTRKEGLSKCGRCKQAFYCNVECQKEDWPMHKLEC). S-adenosyl-L-methionine-binding positions include H137, 206-207 (NH), and 258-260 (YFF). The residue at position 283 (S283) is a Phosphoserine.

This sequence belongs to the class V-like SAM-binding methyltransferase superfamily. As to quaternary structure, interacts with RNA polymerase II and HELZ. Interacts with SIN3A and HDAC1. Interacts (via MYND-type zinc finger) with EPB41L3. Interacts (via SET domain) with p53/TP53. Interacts with RB1 and HSP90AA1.

The protein localises to the cytoplasm. It is found in the cytosol. The protein resides in the nucleus. The enzyme catalyses L-lysyl(4)-[histone H3] + 3 S-adenosyl-L-methionine = N(6),N(6),N(6)-trimethyl-L-lysyl(4)-[histone H3] + 3 S-adenosyl-L-homocysteine + 3 H(+). It catalyses the reaction L-lysyl-[protein] + S-adenosyl-L-methionine = N(6)-methyl-L-lysyl-[protein] + S-adenosyl-L-homocysteine + H(+). Protein-lysine N-methyltransferase that methylates both histones and non-histone proteins, including p53/TP53 and RB1. Specifically trimethylates histone H3 'Lys-4' (H3K4me3) in vivo. The activity requires interaction with HSP90alpha. Shows even higher methyltransferase activity on p53/TP53. Monomethylates 'Lys-370' of p53/TP53, leading to decreased DNA-binding activity and subsequent transcriptional regulation activity of p53/TP53. Monomethylates RB1 at 'Lys-860'. In Homo sapiens (Human), this protein is N-lysine methyltransferase SMYD2 (SMYD2).